A 208-amino-acid chain; its full sequence is Adenylyl-sulfate kinase (208 aa).

31–38 (GLSGSGKS) provides a ligand contact to ATP. Ser-105 (phosphoserine intermediate) is an active-site residue.

The protein belongs to the APS kinase family.

It catalyses the reaction adenosine 5'-phosphosulfate + ATP = 3'-phosphoadenylyl sulfate + ADP + H(+). It functions in the pathway sulfur metabolism; hydrogen sulfide biosynthesis; sulfite from sulfate: step 2/3. Catalyzes the synthesis of activated sulfate. This chain is Adenylyl-sulfate kinase, found in Pseudomonas entomophila (strain L48).